Here is a 542-residue protein sequence, read N- to C-terminus: E3 ubiquitin-protein ligase RNF217 (542 aa).

Disordered stretches follow at residues 1–140 (MGEE…TRVG) and 176–216 (APAS…TDSL). Positions 37–50 (SARAPPLRAASAEP) are enriched in low complexity. Over residues 122-132 (DEQQEAPPGEE) the composition is skewed to acidic residues. A compositionally biased stretch (pro residues) spans 185–196 (PASPPGAPPVLN). Residues 197–213 (PPSTRSSFPSPRLSLPT) are compositionally biased toward low complexity. A TRIAD supradomain region spans residues 259-478 (MVLMCRVCLE…LSIFGCKYRY (220 aa)). Zn(2+)-binding residues include cysteine 263, cysteine 266, cysteine 283, cysteine 286, cysteine 383, cysteine 386, histidine 391, cysteine 396, cysteine 423, and cysteine 426. Residues 263–309 (CRVCLEDKPIKPLPCCKKAVCEECLKVYLSAQVQLGQVEIKCPITEC) form an RING-type 1 zinc finger. An IBR-type zinc finger spans residues 328–396 (IKYKYFLELG…HSPWHEGVNC (69 aa)). Residues 423 to 452 (CPKCKIHIQRTEGCDHMTCSQCNTNFCYRC) form an RING-type 2; atypical zinc finger. The active site involves cysteine 436. Zn(2+) contacts are provided by cysteine 441, cysteine 444, cysteine 449, cysteine 452, histidine 465, and cysteine 474. The chain crosses the membrane as a helical span at residues 503 to 523 (LIMVLGLALGAIAVVIGLFVF).

It belongs to the RBR family. RNF217 subfamily. In terms of assembly, interacts with HAX1. In terms of tissue distribution, mainly expressed in testis and skeletal muscle.

It localises to the membrane. It is found in the cytoplasm. It catalyses the reaction [E2 ubiquitin-conjugating enzyme]-S-ubiquitinyl-L-cysteine + [acceptor protein]-L-lysine = [E2 ubiquitin-conjugating enzyme]-L-cysteine + [acceptor protein]-N(6)-ubiquitinyl-L-lysine.. It participates in protein modification; protein ubiquitination. Its function is as follows. E3 ubiquitin-protein ligase which accepts ubiquitin from E2 ubiquitin-conjugating enzymes in the form of a thioester and then directly transfers the ubiquitin to targeted substrates. Mediates the degradation of the iron exporter ferroportin/SLC40A1 and thus regulates iron homeostasis. This is E3 ubiquitin-protein ligase RNF217 (RNF217) from Homo sapiens (Human).